A 356-amino-acid chain; its full sequence is Chitin elicitor-binding protein (356 aa).

The signal sequence occupies residues 1-28; the sequence is MASLTAALATPAAAALLLLVLLAAPASA. An N-linked (GlcNAc...) asparagine glycan is attached at Asn30. 4 disulfide bridges follow: Cys33–Cys100, Cys41–Cys164, Cys98–Cys162, and Cys100–Cys164. 50–51 contributes to the chitin binding site; the sequence is PN. 2 N-linked (GlcNAc...) asparagine glycosylation sites follow: Asn63 and Asn89. 2 consecutive LysM domains span residues 111-158 and 175-219; these read PIYV…TLWI and LAYS…ILDV. Chitin contacts are provided by residues 117–123, Asn142, 145–152, Thr155, and Gly182; these read PQDGLDA and PDPNKINV. A glycan (N-linked (GlcNAc...) asparagine) is linked at Asn151. The N-linked (GlcNAc...) asparagine glycan is linked to Asn184. Chitin-binding positions include Ser186 and 211–213; that span reads LQM. Disulfide bonds link Cys224/Cys257 and Cys252/Cys274. 5 N-linked (GlcNAc...) asparagine glycosylation sites follow: Asn265, Asn281, Asn290, Asn306, and Asn319. The chain crosses the membrane as a helical span at residues 336 to 356; the sequence is RSMWSMSVISFHMVLIIICFL.

Forms homooligomer. Interacts with CERK1. Binds to chitin oligosaccharide elicitor. Interacts with LYP4 and LYP6. Post-translationally, N-glycosylated. Expressed in seedlings, roots, shoots, stems and flowers.

Its subcellular location is the cell membrane. In terms of biological role, chitin elicitor-binding protein involved in the perception and transduction of chitin oligosaccharide elicitor signal for defense responses. The chain is Chitin elicitor-binding protein from Oryza sativa subsp. japonica (Rice).